Here is a 135-residue protein sequence, read N- to C-terminus: Ribonuclease P protein component (135 aa).

The protein belongs to the RnpA family. In terms of assembly, consists of a catalytic RNA component (M1 or rnpB) and a protein subunit.

The catalysed reaction is Endonucleolytic cleavage of RNA, removing 5'-extranucleotides from tRNA precursor.. In terms of biological role, RNaseP catalyzes the removal of the 5'-leader sequence from pre-tRNA to produce the mature 5'-terminus. It can also cleave other RNA substrates such as 4.5S RNA. The protein component plays an auxiliary but essential role in vivo by binding to the 5'-leader sequence and broadening the substrate specificity of the ribozyme. The chain is Ribonuclease P protein component from Pseudomonas paraeruginosa (strain DSM 24068 / PA7) (Pseudomonas aeruginosa (strain PA7)).